The primary structure comprises 92 residues: MARSVWKGPFVDLHLLKKAEAAQDAGSRAGPIKTWSRRSTIIPQFVGLTFNVYNGQKFIPVSVSEEMVGHKLGEFAPTRNFPGHAADKKGKR.

It belongs to the universal ribosomal protein uS19 family.

Functionally, protein S19 forms a complex with S13 that binds strongly to the 16S ribosomal RNA. The protein is Small ribosomal subunit protein uS19 of Novosphingobium aromaticivorans (strain ATCC 700278 / DSM 12444 / CCUG 56034 / CIP 105152 / NBRC 16084 / F199).